Here is an 80-residue protein sequence, read N- to C-terminus: Acyl carrier protein (80 aa).

The 76-residue stretch at 2–77 (SEINQKVVDI…QVVEYLEKRL (76 aa)) folds into the Carrier domain. O-(pantetheine 4'-phosphoryl)serine is present on Ser37.

This sequence belongs to the acyl carrier protein (ACP) family. In terms of processing, 4'-phosphopantetheine is transferred from CoA to a specific serine of apo-ACP by AcpS. This modification is essential for activity because fatty acids are bound in thioester linkage to the sulfhydryl of the prosthetic group.

The protein localises to the cytoplasm. It functions in the pathway lipid metabolism; fatty acid biosynthesis. Its function is as follows. Carrier of the growing fatty acid chain in fatty acid biosynthesis. The polypeptide is Acyl carrier protein (Amoebophilus asiaticus (strain 5a2)).